The following is a 172-amino-acid chain: WW domain binding protein VOPP1 (172 aa).

The first 22 residues, 1 to 22, serve as a signal peptide directing secretion; sequence MARPLGRVAALLLGLLMECTEA. Residues 23–60 lie on the Extracellular side of the membrane; it reads KKHCWYFEGLYPTYYICRSYEDCCGSRCCVRALSIQRL. A helical transmembrane segment spans residues 61-81; it reads WYFWFLLMMGVLFCCGAGFFI. At 82–172 the chain is on the cytoplasmic side; that stretch reads RRRMYPPPLI…PPYEQVVKDK (91 aa). A disordered region spans residues 139–172; sequence QVQPNSPHGGTTYPPPPSYCNTPPPPYEQVVKDK. Residues 151-165 show a composition bias toward pro residues; it reads YPPPPSYCNTPPPPY.

Belongs to the VOPP1/ECOP family. As to quaternary structure, interacts with WWOX (via WW domain).

It is found in the cytoplasmic vesicle membrane. The protein localises to the late endosome membrane. The protein resides in the lysosome membrane. Functionally, increases the transcriptional activity of NFKB1 by facilitating its nuclear translocation, DNA-binding and associated apoptotic response, when overexpressed. May sequester WWOX in lysosomal vesicles and thereby regulate WWOX role as tumor suppressor. This Rattus norvegicus (Rat) protein is WW domain binding protein VOPP1.